Consider the following 504-residue polypeptide: Pentatricopeptide repeat-containing protein At5g16640, mitochondrial (504 aa).

A mitochondrion-targeting transit peptide spans 1–43; the sequence is MRRSISSKAKSFLHRNLLYSGNSGTSPSSSFSICGFCFSRRAY. PPR repeat units follow at residues 45–79, 80–114, 115–149, 150–184, 185–219, 220–254, 255–289, 290–324, 325–359, 360–394, 395–429, 430–464, and 465–499; these read NGSDYREMLRNGIRFMKLDDSLDLFFHMVQCRPLP, SIADFSRLLSAISKMKKYDVVIYLWEQMQMLGIPH, NLCTCNILLNCFCRCSQLSLALSFLGKMIKLGHEP, SIVTFGSLLNGFCRGDRVYDALYMFDQMVGMGYKP, NVVIYNTIIDGLCKSKQVDNALDLLNRMEKDGIGP, DVVTYNSLISGLCSSGRWSDATRMVSCMTKREIYP, DVFTFNALIDACVKEGRVSEAEEFYEEMIRRSLDP, DIVTYSLLIYGLCMYSRLDEAEEMFGFMVSKGCFP, DVVTYSILINGYCKSKKVEHGMKLFCEMSQRGVVR, NTVTYTILIQGYCRAGKLNVAEEIFRRMVFCGVHP, NIITYNVLLHGLCDNGKIEKALVILADMQKNGMDA, DIVTYNIIIRGMCKAGEVADAWDIYCSLNCQGLMP, and DIWTYTTMMLGLYKKGLRREADALFRKMKEDGILP.

The protein belongs to the PPR family. P subfamily.

Its subcellular location is the mitochondrion. This is Pentatricopeptide repeat-containing protein At5g16640, mitochondrial from Arabidopsis thaliana (Mouse-ear cress).